A 359-amino-acid polypeptide reads, in one-letter code: Peptide chain release factor 1 (359 aa).

Glutamine 235 carries the N5-methylglutamine modification.

It belongs to the prokaryotic/mitochondrial release factor family. Methylated by PrmC. Methylation increases the termination efficiency of RF1.

It is found in the cytoplasm. Functionally, peptide chain release factor 1 directs the termination of translation in response to the peptide chain termination codons UAG and UAA. This chain is Peptide chain release factor 1, found in Ehrlichia ruminantium (strain Gardel).